A 475-amino-acid polypeptide reads, in one-letter code: MQMVSIKNQGCVTQIIGPVLDIEFPNGQLPKVFNALKVKGPENIITCEVQQLLGDNRVRAVAMSSTEGLKRGIEVTDTGAPITVPVGIPTLGRIFNVLGEPVDNLGDIQSEDSLPIHRAAPSFTQLETKPSIFETGIKVVDLLAPYRKGGKIGLFGGAGVGKTVLIMELINNIAKAHGGVSVFGGVGERTREGNDLYEEMKESKVINADNLKESKVALVYGQMNEPPGARMRVGLTALTMAEYFRDINKQDVLLFIDNIFRFVQAGSEVSALLGRMPSAVGYQPTLATEMGTLQERITSTTDGSITSIQAVYVPADDLTDPAPATTFAHLDATTVLSRSLAAKGIYPAVDPLGSTSTMLQPSIVGSQHYSTAQQIKSTLQRYKELQDIIAILGLDELSEDDRLTVARARKIERFLSQPFFVAEVFTGSPGKYVSLEDSIKGFNMILGGELDDLPEQAFYLVGNIDEAISKAEKLK.

156–163 is a binding site for ATP; sequence GGAGVGKT.

This sequence belongs to the ATPase alpha/beta chains family. In terms of assembly, F-type ATPases have 2 components, CF(1) - the catalytic core - and CF(0) - the membrane proton channel. CF(1) has five subunits: alpha(3), beta(3), gamma(1), delta(1), epsilon(1). CF(0) has four main subunits: a(1), b(1), b'(1) and c(9-12).

The protein resides in the plastid. The protein localises to the chloroplast thylakoid membrane. The enzyme catalyses ATP + H2O + 4 H(+)(in) = ADP + phosphate + 5 H(+)(out). Functionally, produces ATP from ADP in the presence of a proton gradient across the membrane. The catalytic sites are hosted primarily by the beta subunits. The polypeptide is ATP synthase subunit beta, chloroplastic (Gracilaria tenuistipitata var. liui (Red alga)).